The sequence spans 102 residues: MKDQKIRIRLKAYDYKLLDRSVEEIVETARRTGARIAGPVPLPTEINKYCVNRSPHVDKKSREQFEIRTHKRLIDIIEPTQSTVDALMKLDLSAGVDVEIKA.

Belongs to the universal ribosomal protein uS10 family. In terms of assembly, part of the 30S ribosomal subunit.

Involved in the binding of tRNA to the ribosomes. This is Small ribosomal subunit protein uS10 from Syntrophus aciditrophicus (strain SB).